A 579-amino-acid chain; its full sequence is Arginine--tRNA ligase (579 aa).

The short motif at 127–137 is the 'HIGH' region element; it reads PNLAKEMHVGH.

The protein belongs to the class-I aminoacyl-tRNA synthetase family. Monomer.

The protein localises to the cytoplasm. It carries out the reaction tRNA(Arg) + L-arginine + ATP = L-arginyl-tRNA(Arg) + AMP + diphosphate. The sequence is that of Arginine--tRNA ligase from Stutzerimonas stutzeri (strain A1501) (Pseudomonas stutzeri).